The sequence spans 309 residues: MEKYENIKQVGEGAFGQVYKSRRTSDGAVFAIKKMPVDRETGFPFTAIREIKLCKSVINKHIIGLDEIVFEEGFIFVVLEYMPYDLTGLLASGAKLSTDQIRSITSQLIEAVSSMHGMGLVHRDIKPSNILLDCHGMLKLTDFGLTREISGMMTNRVCTLWYRAPELLLGETSYSLKVDAWSVGCIMLEMRLGRPPYRGSDEVSQIKLIFEELGIPQDKYKWSDLLDVDIYSKSRSTEEIIAERYGHLFDEEELKVLSGFLCLTSRKRLSVANSRYFTVISSHKNTYIPLSFEEAHELYTKERKETKKP.

Residues 4 to 288 form the Protein kinase domain; sequence YENIKQVGEG…VISSHKNTYI (285 aa). Residues 10–18 and Lys33 contribute to the ATP site; that span reads VGEGAFGQV. Asp124 serves as the catalytic Proton acceptor.

The protein belongs to the protein kinase superfamily. CMGC Ser/Thr protein kinase family. CDC2/CDKX subfamily.

Its subcellular location is the nucleus. It carries out the reaction L-seryl-[protein] + ATP = O-phospho-L-seryl-[protein] + ADP + H(+). The enzyme catalyses L-threonyl-[protein] + ATP = O-phospho-L-threonyl-[protein] + ADP + H(+). Its function is as follows. May play a role in the control of the eukaryotic cell cycle. In Encephalitozoon cuniculi (strain GB-M1) (Microsporidian parasite), this protein is Probable cell division protein kinase ECU11_1290.